The chain runs to 101 residues: Class II hydrophobin 5 (101 aa).

A signal peptide spans 1 to 15 (MQLTALLALATLAIA). Intrachain disulfides connect cysteine 33/cysteine 83, cysteine 44/cysteine 74, cysteine 45/cysteine 57, and cysteine 84/cysteine 95.

This sequence belongs to the cerato-ulmin hydrophobin family. Homodimer. Homodimers further self-assemble to form highly ordered films at water-air interfaces through intermolecular interactions.

The protein resides in the secreted. The protein localises to the cell wall. Its function is as follows. Aerial growth, conidiation, and dispersal of filamentous fungi in the environment rely upon a capability of their secreting small amphipathic proteins called hydrophobins (HPBs) with low sequence identity. Class I can self-assemble into an outermost layer of rodlet bundles on aerial cell surfaces, conferring cellular hydrophobicity that supports fungal growth, development and dispersal; whereas Class II form highly ordered films at water-air interfaces through intermolecular interactions but contribute nothing to the rodlet structure. This Trichoderma asperellum (strain ATCC 204424 / CBS 433.97 / NBRC 101777) protein is Class II hydrophobin 5.